The primary structure comprises 134 residues: Small ribosomal subunit protein uS8 (134 aa).

The protein belongs to the universal ribosomal protein uS8 family. In terms of assembly, part of the 30S ribosomal subunit. Contacts proteins S5 and S12.

Its function is as follows. One of the primary rRNA binding proteins, it binds directly to 16S rRNA central domain where it helps coordinate assembly of the platform of the 30S subunit. In Thermotoga neapolitana (strain ATCC 49049 / DSM 4359 / NBRC 107923 / NS-E), this protein is Small ribosomal subunit protein uS8.